A 518-amino-acid chain; its full sequence is MARARRVKRDSVTHIYQTCKQAGTCPPDVINKVEQTTVADNILKYGSAGVFFGGLGIGTGRGTGGVTGYTPLSEGPGIRVGNTPTVVRPSLVPEAVGPMDILPIDTIDPVEPSVSSVVPLTESSGADLLPGEVETIAEIHPVPEGPTIDSPVVTTSKGSSAILEVAPEPTPPTRVRVSRTQYHNPSFQIITDSTPTQGESSLADHILVTSGSGGQTIGSDITDVIELQEFPSRYSFEIDEPTPPRQSSTPIERPQVVGRRRGISLTNRRLIQQVAVEDPLFLSKPSKLVRFSFDNPVFEEEVTNIFEQDVDMVEEPPDRDFLDVRQLGRPQYSTTPAGYVRVSRLGTRGTIRTRSGAQIGSQVHFYRDLSSINTEDPIELQLLGQHSGDSTIVQGPVESTFVNVDISENPLSESIQAFSDDLLLDETVEDFSGSQLVIGNRRSTTSYTVPRFETTRSGSYYVQDTKGYYVAYPESRNNEEIIYPTPDLPVVIIHTHDNSGDFFLHPSLRRRKRKRKYL.

Positions 1–10 (MARARRVKRD) match the Nuclear localization signal motif. Cys-19 and Cys-25 are disulfide-bonded. A Nuclear localization signal motif is present at residues 510–517 (RRKRKRKY).

It belongs to the papillomaviridae L2 protein family. In terms of assembly, interacts with major capsid protein L1. Interacts with E2; this interaction inhibits E2 transcriptional activity but not the DNA replication function E2. Interacts with host GADD45GIP1. Interacts with host HSPA8; this interaction is required for L2 nuclear translocation. Interacts with host importins KPNB2 and KPNB3. Forms a complex with importin alpha2-beta1 heterodimers via interaction with the importin alpha2 adapter. Interacts with host DYNLT1; this interaction is essential for virus intracellular transport during entry. Interacts (via C-terminus) with host retromer subunits VPS35 and VPS29. Post-translationally, highly phosphorylated.

The protein resides in the virion. It is found in the host nucleus. Its subcellular location is the host early endosome. It localises to the host Golgi apparatus. Minor protein of the capsid that localizes along the inner surface of the virion, within the central cavities beneath the L1 pentamers. Plays a role in capsid stabilization through interaction with the major capsid protein L1. Once the virion enters the host cell, L2 escorts the genomic DNA into the nucleus by promoting escape from the endosomal compartments and traffic through the host Golgi network. Mechanistically, the C-terminus of L2 possesses a cell-penetrating peptide that protudes from the host endosome, interacts with host cytoplasmic retromer cargo and thereby mediates the capsid delivery to the host trans-Golgi network. Plays a role through its interaction with host dynein in the intracellular microtubule-dependent transport of viral capsid toward the nucleus. Mediates the viral genome import into the nucleus through binding to host importins. Once within the nucleus, L2 localizes viral genomes to host PML bodies in order to activate early gene expression for establishment of infection. Later on, promotes late gene expression by interacting with the viral E2 protein and by inhibiting its transcriptional activation functions. During virion assembly, encapsidates the genome by direct interaction with the viral DNA. This chain is Minor capsid protein L2, found in Homo sapiens (Human).